The following is a 292-amino-acid chain: Elongation factor Ts (292 aa).

The involved in Mg(2+) ion dislocation from EF-Tu stretch occupies residues 79–82 (TDFV).

The protein belongs to the EF-Ts family.

The protein localises to the cytoplasm. Functionally, associates with the EF-Tu.GDP complex and induces the exchange of GDP to GTP. It remains bound to the aminoacyl-tRNA.EF-Tu.GTP complex up to the GTP hydrolysis stage on the ribosome. The sequence is that of Elongation factor Ts from Xanthomonas campestris pv. campestris (strain ATCC 33913 / DSM 3586 / NCPPB 528 / LMG 568 / P 25).